Here is a 184-residue protein sequence, read N- to C-terminus: MPIQNSPYKAFATLLNSGGHKVSPAELHGLLLGRSCAGAGFDNEGWFADASMLLETEPQDNIRAALVGLQEMVKGELTGDDMTVVLLLPGDDEPLTERAAALGQWCQGFLAGFGLAIGDKVLGSEAKAVLEDLAAIAQVQDALEESEDGETDYMEVMEYMRVAPLLLFTEFNEPAEPQPKPSLH.

It belongs to the UPF0149 family.

The sequence is that of UPF0149 protein PSPTO_5224 from Pseudomonas syringae pv. tomato (strain ATCC BAA-871 / DC3000).